Reading from the N-terminus, the 117-residue chain is Large ribosomal subunit protein uL18 (117 aa).

This sequence belongs to the universal ribosomal protein uL18 family. Part of the 50S ribosomal subunit; part of the 5S rRNA/L5/L18/L25 subcomplex. Contacts the 5S and 23S rRNAs.

Its function is as follows. This is one of the proteins that bind and probably mediate the attachment of the 5S RNA into the large ribosomal subunit, where it forms part of the central protuberance. This chain is Large ribosomal subunit protein uL18, found in Cronobacter sakazakii (strain ATCC BAA-894) (Enterobacter sakazakii).